A 201-amino-acid chain; its full sequence is Retinol-binding protein 4 (201 aa).

An N-terminal signal peptide occupies residues 1 to 18; that stretch reads MEWVWALVLLAALGSGRG. 3 disulfide bridges follow: Cys-22-Cys-178, Cys-88-Cys-192, and Cys-138-Cys-147. Gln-116 provides a ligand contact to substrate. Arg-139 is subject to Omega-N-methylarginine.

It belongs to the calycin superfamily. Lipocalin family. Interacts with TTR. Interaction with TTR prevents its loss by filtration through the kidney glomeruli. Interacts with STRA6.

The protein localises to the secreted. In terms of biological role, retinol-binding protein that mediates retinol transport in blood plasma. Delivers retinol from the liver stores to the peripheral tissues. Transfers the bound all-trans retinol to STRA6, that then facilitates retinol transport across the cell membrane. The protein is Retinol-binding protein 4 (RBP4) of Oryctolagus cuniculus (Rabbit).